We begin with the raw amino-acid sequence, 346 residues long: E3 ubiquitin-protein ligase RNF146-A (346 aa).

An RING-type zinc finger spans residues Cys37–Arg75. Residues Pro91–Arg167 enclose the WWE domain. Disordered stretches follow at residues Ser195–Leu240 and Glu256–Ala301. Residues Ser202 to Val216 are compositionally biased toward low complexity. Over residues Ser281–Asp295 the composition is skewed to acidic residues.

In terms of assembly, interacts with poly-ADP-ribosylated AXIN1, AXIN2, BLZF1 and CASC3. Post-translationally, ubiquitinated; autoubiquitinated. Autoubiquitination is enhanced upon poly(ADP-ribose)-binding.

It localises to the cytoplasm. It is found in the cytosol. The catalysed reaction is S-ubiquitinyl-[E2 ubiquitin-conjugating enzyme]-L-cysteine + [acceptor protein]-L-lysine = [E2 ubiquitin-conjugating enzyme]-L-cysteine + N(6)-ubiquitinyl-[acceptor protein]-L-lysine.. It functions in the pathway protein modification; protein ubiquitination. Functionally, E3 ubiquitin-protein ligase that specifically binds poly-ADP-ribosylated proteins and mediates their ubiquitination and subsequent degradation. Acts as an activator of the Wnt signaling pathway by mediating the ubiquitination of poly-ADP-ribosylated AXIN1 and AXIN2, 2 key components of the beta-catenin destruction complex. Acts in cooperation with tankyrase proteins (TNKS and TNKS2), which mediate poly-ADP-ribosylation of target proteins AXIN1, AXIN2, BLZF1, CASC3, TNKS and TNKS2. Recognizes and binds tankyrase-dependent poly-ADP-ribosylated proteins via its WWE domain and mediates their ubiquitination. This chain is E3 ubiquitin-protein ligase RNF146-A (RNF146A), found in Bos taurus (Bovine).